Reading from the N-terminus, the 186-residue chain is Meiotically up-regulated gene 163 protein (186 aa).

Its subcellular location is the mitochondrion. In terms of biological role, has a role in meiosis. The chain is Meiotically up-regulated gene 163 protein (mug163) from Schizosaccharomyces pombe (strain 972 / ATCC 24843) (Fission yeast).